The sequence spans 255 residues: MQLIPLPAFTDNYIWMVHDERHALVVDPGDAQPVLEALQQLGLQLETILVTHHHPDHTGGVAALRAATGAQVFGPAREPMPEPLIRLTGDQQLQALGLNFQVIDVPGHTACHIAYFCADVDGAPLLFCGDTLFSAGCGRLFEGSPAQMLASLDTLAALPDATRVCCAHEYTLSNLKFACAVEPVNQALTDYTVKAEALRSQQQPTLPSSILLERQINPFLRTRQATVTQAVQAFDASARDEVSIFAALRQWKNQF.

Residues histidine 52, histidine 54, aspartate 56, histidine 57, histidine 108, aspartate 130, and histidine 168 each contribute to the Zn(2+) site.

This sequence belongs to the metallo-beta-lactamase superfamily. Glyoxalase II family. In terms of assembly, monomer. Requires Zn(2+) as cofactor.

The enzyme catalyses an S-(2-hydroxyacyl)glutathione + H2O = a 2-hydroxy carboxylate + glutathione + H(+). It functions in the pathway secondary metabolite metabolism; methylglyoxal degradation; (R)-lactate from methylglyoxal: step 2/2. Its function is as follows. Thiolesterase that catalyzes the hydrolysis of S-D-lactoyl-glutathione to form glutathione and D-lactic acid. The chain is Hydroxyacylglutathione hydrolase from Albidiferax ferrireducens (strain ATCC BAA-621 / DSM 15236 / T118) (Rhodoferax ferrireducens).